Consider the following 160-residue polypeptide: Cyclic pyranopterin monophosphate synthase (160 aa).

Substrate contacts are provided by residues 77–79 (LCH) and 115–116 (ME). D130 is an active-site residue.

This sequence belongs to the MoaC family. Homohexamer; trimer of dimers.

It carries out the reaction (8S)-3',8-cyclo-7,8-dihydroguanosine 5'-triphosphate = cyclic pyranopterin phosphate + diphosphate. It functions in the pathway cofactor biosynthesis; molybdopterin biosynthesis. In terms of biological role, catalyzes the conversion of (8S)-3',8-cyclo-7,8-dihydroguanosine 5'-triphosphate to cyclic pyranopterin monophosphate (cPMP). This is Cyclic pyranopterin monophosphate synthase from Parvibaculum lavamentivorans (strain DS-1 / DSM 13023 / NCIMB 13966).